The primary structure comprises 751 residues: Dual specificity tyrosine-phosphorylation-regulated kinase 1A (751 aa).

Positions 59 to 68 (YNDQIQQPLP) are enriched in polar residues. Disordered regions lie at residues 59 to 81 (YNDQ…RDPA) and 104 to 129 (YAKK…KVYN). The Bipartite nuclear localization signal signature appears at 109–126 (RRHQQGQGDDSSHKKERK). A Protein kinase domain is found at 151–471 (YEIDSLIGKG…PYYALQHSFF (321 aa)). Residues 157 to 165 (IGKGSFGQV), Lys-180, and 230 to 233 (FEML) each bind ATP. The active-site Proton acceptor is Asp-279. Residues 477–493 (EGTNTSNSVSTSPAMEQ) show a composition bias toward polar residues. Disordered stretches follow at residues 477 to 532 (EGTN…HSGG), 580 to 667 (HVPS…GNQA), and 730 to 751 (GMDR…VASS). Positions 494 to 517 (SQSSGTTSSTSSSSGGSSGTSNSG) are enriched in low complexity. The segment at 585 to 613 (QQNVPHHHGNGSHHHHHHHHHHHGQHVLS) is histidine-rich domain (HRD). The segment covering 589–609 (PHHHGNGSHHHHHHHHHHHGQ) has biased composition (basic residues). Polar residues predominate over residues 611 to 622 (VLSNRTRTRIYN). 2 stretches are compositionally biased toward low complexity: residues 623 to 633 (SPSTSSSTQDS) and 642 to 660 (SMTS…SSST). A compositionally biased stretch (polar residues) spans 742–751 (CVQQSPVASS).

The protein belongs to the protein kinase superfamily. CMGC Ser/Thr protein kinase family. MNB/DYRK subfamily. Post-translationally, autophosphorylated on tyrosine residues.

The protein resides in the nucleus. The protein localises to the nucleus speckle. The enzyme catalyses L-seryl-[protein] + ATP = O-phospho-L-seryl-[protein] + ADP + H(+). The catalysed reaction is L-threonyl-[protein] + ATP = O-phospho-L-threonyl-[protein] + ADP + H(+). It catalyses the reaction L-tyrosyl-[protein] + ATP = O-phospho-L-tyrosyl-[protein] + ADP + H(+). It carries out the reaction [DNA-directed RNA polymerase] + ATP = phospho-[DNA-directed RNA polymerase] + ADP + H(+). Functionally, dual-specificity kinase which possesses both serine/threonine and tyrosine kinase activities. Exhibits a substrate preference for proline at position P+1 and arginine at position P-3. Plays an important role in double-strand breaks (DSBs) repair following DNA damage. Mechanistically, phosphorylates RNF169 and increases its ability to block accumulation of TP53BP1 at the DSB sites thereby promoting homologous recombination repair (HRR). Also acts as a positive regulator of transcription by acting as a CTD kinase that mediates phosphorylation of the CTD (C-terminal domain) of the large subunit of RNA polymerase II (RNAP II) POLR2A. Modulates alternative splicing by phosphorylating the splice factor SRSF6. Phosphorylates SEPTIN4, SEPTIN5 and SF3B1. In Xenopus tropicalis (Western clawed frog), this protein is Dual specificity tyrosine-phosphorylation-regulated kinase 1A.